Reading from the N-terminus, the 157-residue chain is 3-hydroxyacyl-[acyl-carrier-protein] dehydratase FabZ (157 aa).

The active site involves histidine 58.

Belongs to the thioester dehydratase family. FabZ subfamily.

The protein localises to the cytoplasm. The catalysed reaction is a (3R)-hydroxyacyl-[ACP] = a (2E)-enoyl-[ACP] + H2O. In terms of biological role, involved in unsaturated fatty acids biosynthesis. Catalyzes the dehydration of short chain beta-hydroxyacyl-ACPs and long chain saturated and unsaturated beta-hydroxyacyl-ACPs. This is 3-hydroxyacyl-[acyl-carrier-protein] dehydratase FabZ from Brucella ovis (strain ATCC 25840 / 63/290 / NCTC 10512).